Reading from the N-terminus, the 1088-residue chain is DNA-directed RNA polymerase subunit beta (1088 aa).

Belongs to the RNA polymerase beta chain family. As to quaternary structure, in plastids the minimal PEP RNA polymerase catalytic core is composed of four subunits: alpha, beta, beta', and beta''. When a (nuclear-encoded) sigma factor is associated with the core the holoenzyme is formed, which can initiate transcription.

It is found in the plastid. The protein localises to the chloroplast. The enzyme catalyses RNA(n) + a ribonucleoside 5'-triphosphate = RNA(n+1) + diphosphate. DNA-dependent RNA polymerase catalyzes the transcription of DNA into RNA using the four ribonucleoside triphosphates as substrates. The sequence is that of DNA-directed RNA polymerase subunit beta from Chlorokybus atmophyticus (Soil alga).